Consider the following 202-residue polypeptide: Small ribosomal subunit protein uS4 (202 aa).

One can recognise an S4 RNA-binding domain in the interval 94 to 157 (SRLDNLVYRM…KDLPIVAAGA (64 aa)).

This sequence belongs to the universal ribosomal protein uS4 family. Part of the 30S ribosomal subunit. Contacts protein S5. The interaction surface between S4 and S5 is involved in control of translational fidelity.

One of the primary rRNA binding proteins, it binds directly to 16S rRNA where it nucleates assembly of the body of the 30S subunit. Its function is as follows. With S5 and S12 plays an important role in translational accuracy. This chain is Small ribosomal subunit protein uS4, found in Malacoplasma penetrans (strain HF-2) (Mycoplasma penetrans).